A 318-amino-acid polypeptide reads, in one-letter code: Taste receptor type 2 member 7 (318 aa).

The Extracellular portion of the chain corresponds to 1-9 (MADKVQTTL). Residues 10 to 30 (LFLAVGEFSVGILGNAFIGLV) traverse the membrane as a helical segment. At 31 to 55 (NCMDWVKKRKIASIDLILTSLAISR) the chain is on the cytoplasmic side. Residues 56 to 76 (ICLLCIILLDCFTLVLYPDVY) form a helical membrane-spanning segment. Over 77–94 (ATGKEMRIIDFFWTLTNH) the chain is Extracellular. Residues 95–115 (LSIWFATCLSIYYFFKIGNFF) traverse the membrane as a helical segment. Topologically, residues 116–128 (HPLFLWMKWRIDR) are cytoplasmic. A helical transmembrane segment spans residues 129 to 149 (VISWILLGCVVLSVFISLPAT). At 150–187 (ENLNADFRFCVKAKRKTNLTWSCRVNKTQHASTKLFLN) the chain is on the extracellular side. N-linked (GlcNAc...) asparagine glycans are attached at residues N167 and N175. The chain crosses the membrane as a helical span at residues 188–208 (LATLLPFCVCLMSFFLLILSL). The Cytoplasmic portion of the chain corresponds to 209–235 (RRHIRRMQLSATGCRDPSTEAHVRALK). A helical membrane pass occupies residues 236 to 256 (AVISFLLLFIAYYLSFLIATS). Residues 257-266 (SYFMPETELA) lie on the Extracellular side of the membrane. Residues 267–287 (VIFGESIALIYPSSHSFILIL) traverse the membrane as a helical segment. The Cytoplasmic portion of the chain corresponds to 288 to 318 (GNNKLRYVSLKVIWKVMSILKGRKFQQHKQI).

It belongs to the G-protein coupled receptor T2R family.

It is found in the membrane. Its function is as follows. Gustducin-coupled receptor implicated in the perception of bitter compounds in the oral cavity and the gastrointestinal tract. Signals through PLCB2 and the calcium-regulated cation channel TRPM5. The chain is Taste receptor type 2 member 7 (TAS2R7) from Gorilla gorilla gorilla (Western lowland gorilla).